Reading from the N-terminus, the 348-residue chain is Holliday junction branch migration complex subunit RuvB (348 aa).

A large ATPase domain (RuvB-L) region spans residues 1 to 182 (MRIELLNTPA…FGINSRFDYY (182 aa)). ATP is bound by residues Ile21, Arg22, Gly63, Lys66, Thr67, Thr68, 129 to 131 (EDF), Arg172, Tyr182, and Arg219. A Mg(2+)-binding site is contributed by Thr67. The interval 183-253 (SADLLEKIII…IAMTTLDCLE (71 aa)) is small ATPAse domain (RuvB-S). The head domain (RuvB-H) stretch occupies residues 256–348 (EEGLDDMDKK…EFPLEDDQRQ (93 aa)). Arg311 and Arg316 together coordinate DNA.

The protein belongs to the RuvB family. As to quaternary structure, homohexamer. Forms an RuvA(8)-RuvB(12)-Holliday junction (HJ) complex. HJ DNA is sandwiched between 2 RuvA tetramers; dsDNA enters through RuvA and exits via RuvB. An RuvB hexamer assembles on each DNA strand where it exits the tetramer. Each RuvB hexamer is contacted by two RuvA subunits (via domain III) on 2 adjacent RuvB subunits; this complex drives branch migration. In the full resolvosome a probable DNA-RuvA(4)-RuvB(12)-RuvC(2) complex forms which resolves the HJ.

The protein localises to the cytoplasm. The catalysed reaction is ATP + H2O = ADP + phosphate + H(+). In terms of biological role, the RuvA-RuvB-RuvC complex processes Holliday junction (HJ) DNA during genetic recombination and DNA repair, while the RuvA-RuvB complex plays an important role in the rescue of blocked DNA replication forks via replication fork reversal (RFR). RuvA specifically binds to HJ cruciform DNA, conferring on it an open structure. The RuvB hexamer acts as an ATP-dependent pump, pulling dsDNA into and through the RuvAB complex. RuvB forms 2 homohexamers on either side of HJ DNA bound by 1 or 2 RuvA tetramers; 4 subunits per hexamer contact DNA at a time. Coordinated motions by a converter formed by DNA-disengaged RuvB subunits stimulates ATP hydrolysis and nucleotide exchange. Immobilization of the converter enables RuvB to convert the ATP-contained energy into a lever motion, pulling 2 nucleotides of DNA out of the RuvA tetramer per ATP hydrolyzed, thus driving DNA branch migration. The RuvB motors rotate together with the DNA substrate, which together with the progressing nucleotide cycle form the mechanistic basis for DNA recombination by continuous HJ branch migration. Branch migration allows RuvC to scan DNA until it finds its consensus sequence, where it cleaves and resolves cruciform DNA. The chain is Holliday junction branch migration complex subunit RuvB from Chlorobium limicola (strain DSM 245 / NBRC 103803 / 6330).